The primary structure comprises 665 residues: Fructose-1,6-bisphosphatase class 3 (665 aa).

The protein belongs to the FBPase class 3 family. The cofactor is Mn(2+).

The catalysed reaction is beta-D-fructose 1,6-bisphosphate + H2O = beta-D-fructose 6-phosphate + phosphate. It participates in carbohydrate biosynthesis; gluconeogenesis. The protein is Fructose-1,6-bisphosphatase class 3 of Alkaliphilus metalliredigens (strain QYMF).